The chain runs to 698 residues: Phenylalanine aminomutase (L-beta-phenylalanine forming) (698 aa).

The Proton donor/acceptor role is filled by tyrosine 80. A cross-link (5-imidazolinone (Ala-Gly)) is located at residues 175-177; sequence ASG. The residue at position 176 (serine 176) is a 2,3-didehydroalanine (Ser). The (E)-cinnamate site is built by asparagine 231, glutamine 319, arginine 325, asparagine 355, lysine 427, glutamate 455, and asparagine 458.

This sequence belongs to the PAL/histidase family. As to quaternary structure, homotetramer. Contains an active site 4-methylidene-imidazol-5-one (MIO), which is formed autocatalytically by cyclization and dehydration of residues Ala-Ser-Gly.

The protein resides in the cytoplasm. The catalysed reaction is L-phenylalanine = L-beta-phenylalanine. The enzyme catalyses L-phenylalanine = (E)-cinnamate + NH4(+). It participates in alkaloid biosynthesis; taxol biosynthesis. The protein operates within phenylpropanoid metabolism; trans-cinnamate biosynthesis; trans-cinnamate from L-phenylalanine: step 1/1. Functionally, phenylalanine aminomutase that catalyzes the rearrangement of L-phenylalanine to R-beta-phenylalanine. Catalyzes the first committed step in the biosynthesis of the side chain of the alkaloid taxol (paclitaxel), a widely-used compound with antitumor activity. Also has low phenylalanine ammonia-lyase activity. This is Phenylalanine aminomutase (L-beta-phenylalanine forming) (pam) from Taxus canadensis (Canadian yew).